Consider the following 489-residue polypeptide: uncharacterized protein (489 aa).

This is an uncharacterized protein from Bacillus subtilis (strain 168).